The chain runs to 106 residues: Toxin-like structure LSTX-D3 (106 aa).

An N-terminal signal peptide occupies residues 1–20 (MMKVLVVVALLVTLISYSSS). Positions 21–41 (EGIDDLEADELLSLMANEQTR) are excised as a propeptide. Disulfide bonds link Cys-45-Cys-60, Cys-52-Cys-69, Cys-59-Cys-85, and Cys-71-Cys-83.

This sequence belongs to the neurotoxin 19 (CSTX) family. 02 (D7) subfamily. Expressed by the venom gland.

It is found in the secreted. This is Toxin-like structure LSTX-D3 from Lycosa singoriensis (Wolf spider).